A 509-amino-acid chain; its full sequence is FAD-linked oxidoreductase anuG (509 aa).

Positions 1-21 (MVQISNVWGFGLAIMASLAAA) are cleaved as a signal peptide. The FAD-binding PCMH-type domain maps to 75-246 (YAAPKFTVVV…TSFEMSIYPT (172 aa)).

It belongs to the oxygen-dependent FAD-linked oxidoreductase family. It depends on FAD as a cofactor.

It catalyses the reaction (2S,9S)-annullatin H + 2 A = (2S,9S)-annullatin D + 2 AH2. It participates in secondary metabolite biosynthesis. Its function is as follows. Cytochrome P450 monooxygenase; part of the gene cluster that mediates the biosynthesis of annullatin D, an alkylated aromatic polyketide with a fused dihydrobenzofuran lactone ring system that exhibits potent agonistic activities toward the cannabinoid receptors. Within the pathway, anuG is responsible for the five-member lactone ring formation in (2S, 9S)-annullatin D via oxidative lactonization between the two hydroxyl groups. The annullatin backbone 2-hydroxymethyl-3-pentylphenol is assembled from one acetyl-CoA starter unit and 5 malonyl-CoA elongation units by cooperation of the highly reducing polyketide synthase anuA, the short-chain dehydrogenase anuB and the oxidoreductase anuC, before being hydroxylated at the C-5 alkyl chain by the cytochrome P450 monooxygenase anuE to form (8S)-annullatin E. The prenyltransferase anuH subsequently installs one isoprenyl group at the benzene ring to form (8S)-annullatin J. Enzymatic or nonenzymatic dihydro-benzofuran ring formation between the prenyl and the phenolic hydroxyl groups in (8S)-annullatin J results in two diastereomers (2S,9S)-annullatin H and compound 12. The intermediate (2S,9S)-annullatin H is then converted to (2S,9S)-annullatin D by the FAD-linked oxidoreductase anuG-catalyzed five-member lactone ring formation. The isomer 12 acts as a substrate for the short-chain dehydrogenase anuF and is oxidized to (2R)-annullatin F, which is subsequently acetylated by an acetyltransferase leading to (2R)-annullatin G formation. The remaining enzymes identified within the cluster, anuD, anuI and anuJ, seem not to be involved in annullatin biosynthesis. This chain is FAD-linked oxidoreductase anuG, found in Penicillium roqueforti (strain FM164).